The sequence spans 1132 residues: DNA-directed RNA polymerase I subunit RPA2 (1132 aa).

The segment at 1067–1098 (CMDCGSLLSPLLEKPPPNWSATRHRKTICLLC) adopts a C4-type zinc-finger fold.

Belongs to the RNA polymerase beta chain family. In terms of assembly, component of the RNA polymerase I (Pol I) complex consisting of at least 13 subunits.

It localises to the nucleus. The protein resides in the nucleolus. Its subcellular location is the chromosome. It catalyses the reaction RNA(n) + a ribonucleoside 5'-triphosphate = RNA(n+1) + diphosphate. Functionally, DNA-dependent RNA polymerase catalyzes the transcription of DNA into RNA using the four ribonucleoside triphosphates as substrates. Second largest core component of RNA polymerase I which synthesizes ribosomal RNA precursors. Proposed to contribute to the polymerase catalytic activity and forms the polymerase active center together with the largest subunit. Pol I is composed of mobile elements and RPA2 is part of the core element with the central large cleft and probably a clamp element that moves to open and close the cleft. This is DNA-directed RNA polymerase I subunit RPA2 (polr1b) from Danio rerio (Zebrafish).